The following is a 261-amino-acid chain: Carnitinyl-CoA dehydratase (261 aa).

Residue Glu111 is the Nucleophile of the active site. Glu131 (proton acceptor) is an active-site residue.

It belongs to the enoyl-CoA hydratase/isomerase family.

It catalyses the reaction (R)-carnitinyl-CoA = crotonobetainyl-CoA + H2O. It participates in amine and polyamine metabolism; carnitine metabolism. Functionally, catalyzes the reversible dehydration of L-carnitinyl-CoA to crotonobetainyl-CoA. In Salmonella dublin (strain CT_02021853), this protein is Carnitinyl-CoA dehydratase.